A 554-amino-acid chain; its full sequence is 5'-AMP-activated protein kinase catalytic subunit alpha-1 (554 aa).

In terms of domain architecture, Protein kinase spans 22 to 274; sequence YILGDTLGVG…IKDIREHEWF (253 aa). Residue Thr-27 is modified to Phosphothreonine. ATP contacts are provided by residues 28–36 and Lys-51; that span reads LGVGTFGKV. Asp-145 (proton acceptor) is an active-site residue. A Phosphothreonine; by LKB1 and CaMKK2 modification is found at Thr-178. Residues Thr-264 and Thr-350 each carry the phosphothreonine modification. Residues 297–376 are AIS; the sequence is EALKEVCEKF…PERVPFLVAE (80 aa). Position 351 is a phosphoserine (Ser-351). At Ser-355 the chain carries Phosphoserine; by ULK1. Thr-363 bears the Phosphothreonine; by ULK1 mark. Thr-377 carries the post-translational modification Phosphothreonine. Ser-392 is subject to Phosphoserine; by ULK1. Position 462 is a phosphoserine (Ser-462). Residues 480 to 500 show a composition bias toward polar residues; that stretch reads KSGTATPQRSGSVSNYRSCQR. The disordered stretch occupies residues 480–531; it reads KSGTATPQRSGSVSNYRSCQRSDSDAEAQGKSSEVSLTSSVTSLDSSPVDLT. Ser-481 bears the Phosphoserine; by ULK1 mark. Thr-483 carries the phosphothreonine; by ULK1 modification. Thr-485 bears the Phosphothreonine mark. A phosphoserine mark is found at Ser-491, Ser-503, Ser-519, and Ser-522. Positions 511-530 are enriched in low complexity; sequence SSEVSLTSSVTSLDSSPVDL.

This sequence belongs to the protein kinase superfamily. CAMK Ser/Thr protein kinase family. SNF1 subfamily. As to quaternary structure, AMPK is a heterotrimer of an alpha catalytic subunit (PRKAA1 or PRKAA2), a beta (PRKAB1 or PRKAB2) and a gamma non-catalytic subunits (PRKAG1, PRKAG2 or PRKAG3). Interacts with FNIP1 and FNIP2. The cofactor is Mg(2+). Ubiquitinated. Post-translationally, phosphorylated at Thr-183 by STK11/LKB1 in complex with STE20-related adapter-alpha (STRADA) pseudo kinase and CAB39. Also phosphorylated at Thr-183 by CAMKK2; triggered by a rise in intracellular calcium ions, without detectable changes in the AMP/ATP ratio. CAMKK1 can also phosphorylate Thr-183, but at a much lower level. Dephosphorylated by protein phosphatase 2A and 2C (PP2A and PP2C). Phosphorylated by ULK1 and ULK2; leading to negatively regulate AMPK activity and suggesting the existence of a regulatory feedback loop between ULK1, ULK2 and AMPK. Dephosphorylated by PPM1A and PPM1B. In terms of processing, glycosylated; O-GlcNAcylated by OGT, promoting the AMP-activated protein kinase (AMPK) activity.

Its subcellular location is the cytoplasm. It is found in the nucleus. The catalysed reaction is L-seryl-[protein] + ATP = O-phospho-L-seryl-[protein] + ADP + H(+). It catalyses the reaction L-threonyl-[protein] + ATP = O-phospho-L-threonyl-[protein] + ADP + H(+). It carries out the reaction L-seryl-[acetyl-CoA carboxylase] + ATP = O-phospho-L-seryl-[acetyl-CoA carboxylase] + ADP + H(+). The enzyme catalyses L-seryl-[3-hydroxy-3-methylglutaryl-coenzyme A reductase] + ATP = O-phospho-L-seryl-[3-hydroxy-3-methylglutaryl-coenzyme A reductase] + ADP + H(+). The catalysed reaction is L-seryl-[tau protein] + ATP = O-phospho-L-seryl-[tau protein] + ADP + H(+). It catalyses the reaction L-threonyl-[tau protein] + ATP = O-phospho-L-threonyl-[tau protein] + ADP + H(+). Its activity is regulated as follows. Activated by phosphorylation on Thr-183. Binding of AMP to non-catalytic gamma subunit (PRKAG1, PRKAG2 or PRKAG3) results in allosteric activation, inducing phosphorylation on Thr-183. AMP-binding to gamma subunit also sustains activity by preventing dephosphorylation of Thr-183. ADP also stimulates Thr-183 phosphorylation, without stimulating already phosphorylated AMPK. ATP promotes dephosphorylation of Thr-183, rendering the enzyme inactive. Under physiological conditions AMPK mainly exists in its inactive form in complex with ATP, which is much more abundant than AMP. Selectively inhibited by compound C (6-[4-(2-Piperidin-1-yl-ethoxy)-phenyl)]-3-pyridin-4-yl-pyyrazolo[1,5-a] pyrimidine. Activated by resveratrol, a natural polyphenol present in red wine, and S17834, a synthetic polyphenol. Catalytic subunit of AMP-activated protein kinase (AMPK), an energy sensor protein kinase that plays a key role in regulating cellular energy metabolism. In response to reduction of intracellular ATP levels, AMPK activates energy-producing pathways and inhibits energy-consuming processes: inhibits protein, carbohydrate and lipid biosynthesis, as well as cell growth and proliferation. AMPK acts via direct phosphorylation of metabolic enzymes, and by longer-term effects via phosphorylation of transcription regulators. Regulates lipid synthesis by phosphorylating and inactivating lipid metabolic enzymes such as ACACA, ACACB, GYS1, HMGCR and LIPE; regulates fatty acid and cholesterol synthesis by phosphorylating acetyl-CoA carboxylase (ACACA and ACACB) and hormone-sensitive lipase (LIPE) enzymes, respectively. Promotes lipolysis of lipid droplets by mediating phosphorylation of isoform 1 of CHKA (CHKalpha2). Regulates insulin-signaling and glycolysis by phosphorylating IRS1, PFKFB2 and PFKFB3. AMPK stimulates glucose uptake in muscle by increasing the translocation of the glucose transporter SLC2A4/GLUT4 to the plasma membrane, possibly by mediating phosphorylation of TBC1D4/AS160. Regulates transcription and chromatin structure by phosphorylating transcription regulators involved in energy metabolism such as CRTC2/TORC2, FOXO3, histone H2B, HDAC5, MEF2C, MLXIPL/ChREBP, EP300, HNF4A, p53/TP53, SREBF1, SREBF2 and PPARGC1A. Acts as a key regulator of glucose homeostasis in liver by phosphorylating CRTC2/TORC2, leading to CRTC2/TORC2 sequestration in the cytoplasm. In response to stress, phosphorylates 'Ser-36' of histone H2B (H2BS36ph), leading to promote transcription. Acts as a key regulator of cell growth and proliferation by phosphorylating FNIP1, TSC2, RPTOR, WDR24 and ATG1/ULK1: in response to nutrient limitation, negatively regulates the mTORC1 complex by phosphorylating RPTOR component of the mTORC1 complex and by phosphorylating and activating TSC2. Also phosphorylates and inhibits GATOR2 subunit WDR24 in response to nutrient limitation, leading to suppress glucose-mediated mTORC1 activation. In response to energetic stress, phosphorylates FNIP1, inactivating the non-canonical mTORC1 signaling, thereby promoting nuclear translocation of TFEB and TFE3, and inducing transcription of lysosomal or autophagy genes. In response to nutrient limitation, promotes autophagy by phosphorylating and activating ATG1/ULK1. In that process also activates WDR45/WIPI4. Phosphorylates CASP6, thereby preventing its autoprocessing and subsequent activation. In response to nutrient limitation, phosphorylates transcription factor FOXO3 promoting FOXO3 mitochondrial import. Also acts as a regulator of cellular polarity by remodeling the actin cytoskeleton; probably by indirectly activating myosin. AMPK also acts as a regulator of circadian rhythm by mediating phosphorylation of CRY1, leading to destabilize it. May regulate the Wnt signaling pathway by phosphorylating CTNNB1, leading to stabilize it. Also has tau-protein kinase activity: in response to amyloid beta A4 protein (APP) exposure, activated by CAMKK2, leading to phosphorylation of MAPT/TAU; however the relevance of such data remains unclear in vivo. Also phosphorylates CFTR, EEF2K, KLC1, NOS3 and SLC12A1. Regulates hepatic lipogenesis. Activated via SIRT3, represses sterol regulatory element-binding protein (SREBP) transcriptional activities and ATP-consuming lipogenesis to restore cellular energy balance. Upon stress, regulates mitochondrial fragmentation through phosphorylation of MTFR1L. The chain is 5'-AMP-activated protein kinase catalytic subunit alpha-1 (PRKAA1) from Pongo abelii (Sumatran orangutan).